Reading from the N-terminus, the 169-residue chain is Small ribosomal subunit protein uS5 (169 aa).

An S5 DRBM domain is found at Leu-14–Val-77.

This sequence belongs to the universal ribosomal protein uS5 family. Part of the 30S ribosomal subunit. Contacts proteins S4 and S8.

Functionally, with S4 and S12 plays an important role in translational accuracy. In terms of biological role, located at the back of the 30S subunit body where it stabilizes the conformation of the head with respect to the body. This chain is Small ribosomal subunit protein uS5, found in Methylococcus capsulatus (strain ATCC 33009 / NCIMB 11132 / Bath).